A 132-amino-acid polypeptide reads, in one-letter code: Large ribosomal subunit protein bL17 (132 aa).

It belongs to the bacterial ribosomal protein bL17 family. Part of the 50S ribosomal subunit. Contacts protein L32.

The chain is Large ribosomal subunit protein bL17 from Ralstonia pickettii (strain 12J).